The primary structure comprises 51 residues: U-Asilidin(1)-Mar1a (51 aa).

A signal peptide spans 1–23; it reads MANYIEVFSVLAIIFATVLAALA. 3 cysteine pairs are disulfide-bonded: Cys-26–Cys-40, Cys-33–Cys-44, and Cys-39–Cys-49.

Belongs to the asilidin-1 family. In terms of tissue distribution, expressed by the venom gland. Is the most highly expressed peptide and is around 3000 times higher expressed in the thoracic glands compared to its body tissues.

The protein localises to the secreted. In terms of biological role, induces neurotoxic effect on honeybees, including slow movements, disorientation and paralysis. Since it provokes similar symptoms than omega-atracotoxin, it is probable that it acts in the same way by inhibiting voltage-gated calcium channels. The polypeptide is U-Asilidin(1)-Mar1a (Machimus arthriticus (Breck robberfly)).